A 1152-amino-acid chain; its full sequence is Autotransporter adhesin BpaC (1152 aa).

The N-terminal stretch at 1–71 is a signal peptide; sequence MNRIFKSIWC…PFAEEAMAAN (71 aa). Residues 72–1061 are surface exposed passenger domain; it reads NAGVCLTYNG…VGQLNSAVSG (990 aa). Disordered stretches follow at residues 420–886 and 900–949; these read GLQG…AGAT and TATG…ESAA. Positions 427–442 are enriched in polar residues; that stretch reads ANTGTASGDNSTASGD. The span at 443 to 504 shows a compositional bias: low complexity; sequence NATASGTNST…ANGTNSTASG (62 aa). A compositionally biased stretch (polar residues) spans 505 to 519; that stretch reads DNSTASGTNASATGE. The span at 520-588 shows a compositional bias: low complexity; the sequence is NSTATGTDST…ANGTNSTASG (69 aa). A compositionally biased stretch (polar residues) spans 589-603; that stretch reads DNSTASGTNASATGE. A compositionally biased stretch (low complexity) spans 604–630; sequence NSTATGTDSTASGSNSTANGTNSTASG. Positions 631-645 are enriched in polar residues; sequence DNSTASGTNASATGE. The span at 646 to 672 shows a compositional bias: low complexity; sequence NSTATGTDSTASGSNSTANGTNSTASG. The span at 673-687 shows a compositional bias: polar residues; the sequence is DNSTASGTNASATGE. Over residues 688 to 714 the composition is skewed to low complexity; it reads NSTATGTDSTASGSNSTANGTNSTASG. Positions 715-729 are enriched in polar residues; sequence DNSTASGTNASATGE. Low complexity predominate over residues 730-756; sequence NSTATGTDSTASGSNSTANGANSTASG. The segment covering 757–771 has biased composition (polar residues); the sequence is DNSTASGTNASATGE. Composition is skewed to low complexity over residues 772–840 and 848–886; these read NSTA…TASG and TNAS…AGAT. The segment at 1062–1099 is outer membrane translocation of the passenger domain; it reads IRNQMDGMQGQIDTLARDAYSGIAAATALTMIPDVDPG. The segment at 1100–1152 is translocator domain; sequence KTLAVGIGTANFKGYQASALGATARITQNLKVKTGVSYSGSNYVWGAGMSYQW.

Belongs to the autotransporter-2 (AT-2) (TC 1.B.40) family. As to quaternary structure, homotrimer.

Its subcellular location is the cell surface. The protein localises to the cell outer membrane. Functionally, involved in virulence. Mediates adherence to human respiratory epithelial cells. The protein is Autotransporter adhesin BpaC of Burkholderia pseudomallei (strain 1026b).